Reading from the N-terminus, the 517-residue chain is Beta-galactoside alpha-2,6-sialyltransferase 2 (517 aa).

Residues 1 to 10 (MKPNLKQWKQ) lie on the Cytoplasmic side of the membrane. Residues 11–31 (FMLFGICAWGLLFLVIFVYFT) form a helical; Signal-anchor for type II membrane protein membrane-spanning segment. The Lumenal segment spans residues 32–517 (DSNSVEPVPS…IHCPIKDHIT (486 aa)). Residues Asn201, Asn298, and Asn328 are each glycosylated (N-linked (GlcNAc...) asparagine). 3 disulfides stabilise this stretch: Cys244-Cys510, Cys287-Cys439, and Cys457-Cys468.

The protein belongs to the glycosyltransferase 29 family.

The protein resides in the golgi apparatus. Its subcellular location is the golgi stack membrane. The enzyme catalyses a beta-D-galactoside + CMP-N-acetyl-beta-neuraminate = an N-acetyl-alpha-neuraminyl-(2-&gt;6)-beta-D-galactosyl derivative + CMP + H(+). Its function is as follows. Transfers sialic acid from the donor of substrate CMP-sialic acid to galactose containing acceptor substrates. This Xenopus tropicalis (Western clawed frog) protein is Beta-galactoside alpha-2,6-sialyltransferase 2 (st6gal2).